A 647-amino-acid polypeptide reads, in one-letter code: MGKIRKLDDQLSNLIAAGEVVERPASVVKELVENSIDANSTSIEIHLEEAGLSKIRIIDNGDGIAEEDCIVAFERHATSKIKDENDLFRIRTLGFRGEALPSIASVSELELITSTGDAPGTHLIIKGGDIIKQEKTASRKGTDITVQNLFFNTPARLKYMKTIHTELGNITDIVYRIAMSHPEVSLKLFHNEKKLLHTSGNGDVRQVLASIYSIQVAKKLVPIEAESLDFTIKGYVTLPEVTRASRNYMSTIVNGRYVRNFVLMKAIQQGYHTLLPVGRYPIGFLSIEMDPMLVDVNVHPAKLEVRFSKEQELLKLIEETLQAAFKKIQLIPDAGVTTKKKEKDESVQEQFQFEHAKPKEPSMPDIVLPTGMDAKQEEPQAVKQPPQLWQPPKQEWQPPQSLIREEQSWQPSTKPIIEEPIQEEKSWDSNEEDFELEELEEEVREIKEIEMNGNDLPPLYPIGQMHGTYIFAQNDKGLYMIDQHAAQERINYEYFRDKVGRVAQEVQELLVPYRIDLSLTEFLRVEEQLEELKKVGLFLEQFGHQSFIVRSHPTWFPKGQETEIIDEMMEQVVKLKKVDIKKLREEAAIMMSCKASIKANQYLTNDQIFALLEELRTTTNPYTCPHGRPILVHHSTYELEKMFKRVM.

The disordered stretch occupies residues 375 to 395 (KQEEPQAVKQPPQLWQPPKQE). Residues 383-395 (KQPPQLWQPPKQE) are compositionally biased toward low complexity.

The protein belongs to the DNA mismatch repair MutL/HexB family.

In terms of biological role, this protein is involved in the repair of mismatches in DNA. It is required for dam-dependent methyl-directed DNA mismatch repair. May act as a 'molecular matchmaker', a protein that promotes the formation of a stable complex between two or more DNA-binding proteins in an ATP-dependent manner without itself being part of a final effector complex. This Bacillus cereus (strain B4264) protein is DNA mismatch repair protein MutL.